The sequence spans 106 residues: MISVNFSPLISSSNTHICTIGAKTSGYPLQFSATTLAIVVPQLPDPITVTLKGFSAAFKETEEELLFLPAFKWPEVKFNLSAAADIFILSIFVFVEGGGVQYTIVS.

This is an uncharacterized protein from Saccharomyces cerevisiae (strain ATCC 204508 / S288c) (Baker's yeast).